A 607-amino-acid chain; its full sequence is Chaperone protein DnaK (607 aa).

The residue at position 174 (Thr174) is a Phosphothreonine; by autocatalysis. The interval 571-607 (AAMYQKQAQQQQPGPGPDAGKDKDDKDKTVDADYEVK) is disordered. Residues 589–607 (AGKDKDDKDKTVDADYEVK) show a composition bias toward basic and acidic residues.

The protein belongs to the heat shock protein 70 family.

Its function is as follows. Acts as a chaperone. The protein is Chaperone protein DnaK of Desulforudis audaxviator (strain MP104C).